Here is a 381-residue protein sequence, read N- to C-terminus: Tumor necrosis factor receptor superfamily member 10B (381 aa).

Positions 1–52 are cleaved as a signal peptide; it reads MEPPGPSTPTASAAARADHYTPGLRPLPKRRLLYSFALLLAVLQAVFVPVTA. TNFR-Cys repeat units lie at residues 26–86, 87–129, and 130–169; these read PLPK…GNCK, PCRE…NTVC, and RCKPGTFEDKDSPEICQSCSNCTDGEEELTSCTPRENRKC. The Extracellular portion of the chain corresponds to 53-180; sequence NPAHNRPAGL…SKTAWASWHK (128 aa). Disulfide bonds link Cys-74/Cys-85, Cys-88/Cys-105, Cys-108/Cys-121, Cys-111/Cys-129, Cys-131/Cys-145, Cys-148/Cys-161, and Cys-151/Cys-169. A helical membrane pass occupies residues 181–201; sequence LGLWIGLLVPVVLLIGALLVW. Topologically, residues 202–381 are cytoplasmic; it reads KTGAWRQWLL…ETGPGGSQCV (180 aa). The disordered stretch occupies residues 228 to 260; that stretch reads HSSLLDRQTSSTTNDSNHNTEPGKTQKTGKKLL. Low complexity predominate over residues 236–247; that stretch reads TSSTTNDSNHNT. In terms of domain architecture, Death spans 273–356; the sequence is KFIFEYCSDI…DAMEKIEDYA (84 aa). Arg-293 is a glycosylation site ((Microbial infection) N-beta-linked (GlcNAc) arginine).

Monomer. Can interact with TRADD and RIPK1. Three TNFRSF10B molecules interact with the TNFSF10 homotrimer. In the absence of stimulation, interacts with BIRC2, DDX3X and GSK3B. The interaction with BIRC2 and DDX3X is further enhanced upon receptor stimulation and accompanied by DDX3X and BIRC2 cleavage. (Microbial infection) Glycosylated at Arg-293 by S.typhimurium protein Ssek3. Highly expressed in heart, lung and kidney.

It is found in the membrane. Its function is as follows. Receptor for the cytotoxic ligand TNFSF10/TRAIL. The adapter molecule FADD recruits caspase-8 to the activated receptor. The resulting death-inducing signaling complex (DISC) performs caspase-8 proteolytic activation which initiates the subsequent cascade of caspases (aspartate-specific cysteine proteases) mediating apoptosis. Promotes the activation of NF-kappa-B. Essential for ER stress-induced apoptosis. The chain is Tumor necrosis factor receptor superfamily member 10B (Tnfrsf10b) from Mus musculus (Mouse).